The following is a 185-amino-acid chain: Large ribosomal subunit protein bL17 (185 aa).

This sequence belongs to the bacterial ribosomal protein bL17 family. Part of the 50S ribosomal subunit. Contacts protein L32.

This chain is Large ribosomal subunit protein bL17, found in Rhodococcus erythropolis (strain PR4 / NBRC 100887).